The sequence spans 2556 residues: Non-reducing polyketide synthase tazA (2556 aa).

The interval 16–270 is N-terminal acylcarrier protein transacylase domain (SAT); sequence LFGPQALSFT…QAIGLRGRFH (255 aa). The Nucleophile; for transacylase activity role is filled by cysteine 143. Histidine 270 (proton donor/acceptor; for transacylase activity) is an active-site residue. The Ketosynthase family 3 (KS3) domain occupies 397–769; that stretch reads EDEIAVIGMA…GSNASMIVTQ (373 aa). The tract at residues 876-1209 is malonyl-CoA:ACP transacylase (MAT) domain; sequence CFGGQISRFV…WAHHCTQAPA (334 aa). The tract at residues 1254–1383 is N-terminal hotdog fold; it reads YTFVGYQDEG…GQIIFQSAAE (130 aa). Positions 1254-1560 constitute a PKS/mFAS DH domain; sequence YTFVGYQDEG…YSRLPKSTMS (307 aa). Positions 1257-1564 are product template (PT) domain; it reads VGYQDEGKRQ…PKSTMSKMLT (308 aa). Histidine 1285 serves as the catalytic Proton acceptor; for dehydratase activity. The tract at residues 1408–1560 is C-terminal hotdog fold; that stretch reads DPDDVLQGRN…YSRLPKSTMS (153 aa). The active-site Proton donor; for dehydratase activity is aspartate 1465. The segment at 1567–1621 is disordered; it reads TAPSERRAQVDSPSMPASINAPPSASEQAPVEPAPQTKESAPIAEPGAGGQSNSK. Residues 1577 to 1593 show a composition bias toward polar residues; sequence DSPSMPASINAPPSASE. The region spanning 1620 to 1694 is the Carrier domain; the sequence is SKVPGIVVEV…DVVQCVHKTL (75 aa). At serine 1654 the chain carries O-(pantetheine 4'-phosphoryl)serine. The tract at residues 1700-1731 is disordered; sequence SAAQESEGNLTPASSGTQSPRSDPVSDTSLSD. The segment covering 1702–1731 has biased composition (polar residues); that stretch reads AQESEGNLTPASSGTQSPRSDPVSDTSLSD. The segment at 1830–2107 is methyltransferase domain; it reads LEHEGRLIDI…DWTDGHLAEN (278 aa). The tract at residues 2180 to 2424 is NADPH-binding (R) domain; that stretch reads VTGATGSLGA…WTPVDVVAST (245 aa).

Pantetheine 4'-phosphate serves as cofactor.

It participates in secondary metabolite biosynthesis. In terms of biological role, non-reducing polyketide synthase; part of the gene cluster that mediates the biosynthesis of azaterrilone A and other azaphilones, a class of fungal metabolites characterized by a highly oxygenated pyrano-quinone bicyclic core and exhibiting a broad range of bioactivities. The first step of the pathway begins with tazA that assembles one acetyl-CoA starter unit, five malonyl-CoA units, and catalyzes a series of Claisen condensations, methylation, PT-mediated cyclization, and finally releases the first hexaketide precursor through the R-domain. The tazA product then undergoes reduction on its terminal ketone and the following pyran-ring formation by yet undetermined enzyme(s). Dehydration and enoyl reduction, possibly involving the trans-enoyl reductase tazE leads to the next intermediate. TazD is predicted as an acetyltransferase and might catalyze the acetylation steps leading to the synthesis of azaterrilone A. Azaterrilone A is not the final product of the taz pathway and both the highly reducing polyketide synthase tazB and the dual enzyme tazHJ catalyze late steps of the pathway, leading to the production of the 2 final stereoisomers that contain additional polyketide modification whose structures have still to be determined. The protein is Non-reducing polyketide synthase tazA of Aspergillus terreus (strain NIH 2624 / FGSC A1156).